The following is a 333-amino-acid chain: Ornithine carbamoyltransferase (333 aa).

Carbamoyl phosphate contacts are provided by residues 56–59 (STRT), Gln83, Arg107, and 134–137 (HPTQ). Residues Asn167, Asp231, and 235-236 (SM) each bind L-ornithine. Carbamoyl phosphate is bound by residues 273 to 274 (CL) and Arg318.

Belongs to the aspartate/ornithine carbamoyltransferase superfamily. OTCase family.

The protein localises to the cytoplasm. The enzyme catalyses carbamoyl phosphate + L-ornithine = L-citrulline + phosphate + H(+). It participates in amino-acid biosynthesis; L-arginine biosynthesis; L-arginine from L-ornithine and carbamoyl phosphate: step 1/3. Its function is as follows. Reversibly catalyzes the transfer of the carbamoyl group from carbamoyl phosphate (CP) to the N(epsilon) atom of ornithine (ORN) to produce L-citrulline. The polypeptide is Ornithine carbamoyltransferase (argF) (Staphylococcus aureus (strain Mu50 / ATCC 700699)).